A 172-amino-acid chain; its full sequence is Translationally-controlled tumor protein (172 aa).

Residues 1 to 172 (MIIYRDLISH…FKDGLEMEKC (172 aa)) enclose the TCTP domain. Ser46 bears the Phosphoserine; by PLK1 mark. A Phosphoserine modification is found at Ser53. Ser64 carries the post-translational modification Phosphoserine; by PLK1. A required for reduction of TSC22D1 protein stability region spans residues 70 to 172 (VDIVMNHHLQ…FKDGLEMEKC (103 aa)).

It belongs to the TCTP family. In terms of assembly, homodimer. Interacts with STEAP3. Interacts with TSC22D1; interaction results in the destabilization of TSC22D1 protein.

Its subcellular location is the cytoplasm. Its function is as follows. Involved in calcium binding and microtubule stabilization. Acts as a negative regulator of TSC22D1-mediated apoptosis, via interaction with and destabilization of TSC22D1 protein. This chain is Translationally-controlled tumor protein (TPT1), found in Oryctolagus cuniculus (Rabbit).